Consider the following 286-residue polypeptide: 2-oxoglutarate synthase subunit KorB (286 aa).

In terms of assembly, heterotetramer of the KorA, KorB, KorC and KorD subunits.

The catalysed reaction is 2 oxidized [2Fe-2S]-[ferredoxin] + 2-oxoglutarate + CoA = succinyl-CoA + 2 reduced [2Fe-2S]-[ferredoxin] + CO2 + H(+). This Methanothermobacter thermautotrophicus (strain ATCC 29096 / DSM 1053 / JCM 10044 / NBRC 100330 / Delta H) (Methanobacterium thermoautotrophicum) protein is 2-oxoglutarate synthase subunit KorB (korB).